The following is a 699-amino-acid chain: Nucleolar protein 9 (699 aa).

Residues 1–27 (MPRENQKRGRRATEKAKKEASKRKRDE) are compositionally biased toward basic and acidic residues. The tract at residues 1-47 (MPRENQKRGRRATEKAKKEASKRKRDEGIEEPTLKRLKPSADEDNAV) is disordered. Pumilio repeat units follow at residues 115 to 150 (EARG…RLFN) and 151 to 186 (KFIG…KASK). The segment at 184-204 (ASKTKSKKDDDIEMDEDEEPE) is disordered. Residues 194-204 (DIEMDEDEEPE) are compositionally biased toward acidic residues. Pumilio repeat units lie at residues 359–394 (ETTR…SLYR) and 396–431 (YLRD…AVME). The disordered stretch occupies residues 494 to 514 (DNKEKSDKNGPPGESNPGSAA). Pumilio repeat units follow at residues 544 to 581 (ALSP…RQFT) and 583 to 620 (RFTS…RMAQ).

Belongs to the NOP9 family.

It localises to the nucleus. Its subcellular location is the nucleolus. RNA-binding nucleolar protein required for pre-rRNA processing. Involved in production of 18S rRNA and assembly of small ribosomal subunit. This Emericella nidulans (strain FGSC A4 / ATCC 38163 / CBS 112.46 / NRRL 194 / M139) (Aspergillus nidulans) protein is Nucleolar protein 9 (nop9).